We begin with the raw amino-acid sequence, 431 residues long: Enolase (431 aa).

Glutamine 166 provides a ligand contact to (2R)-2-phosphoglycerate. Catalysis depends on glutamate 208, which acts as the Proton donor. Positions 245, 288, and 315 each coordinate Mg(2+). (2R)-2-phosphoglycerate contacts are provided by lysine 340, arginine 369, serine 370, and lysine 391. The Proton acceptor role is filled by lysine 340.

This sequence belongs to the enolase family. Mg(2+) is required as a cofactor.

It is found in the cytoplasm. Its subcellular location is the secreted. The protein resides in the cell surface. The catalysed reaction is (2R)-2-phosphoglycerate = phosphoenolpyruvate + H2O. It participates in carbohydrate degradation; glycolysis; pyruvate from D-glyceraldehyde 3-phosphate: step 4/5. Catalyzes the reversible conversion of 2-phosphoglycerate (2-PG) into phosphoenolpyruvate (PEP). It is essential for the degradation of carbohydrates via glycolysis. In Clostridium botulinum (strain 657 / Type Ba4), this protein is Enolase.